The primary structure comprises 199 residues: Large ribosomal subunit protein uL18 (199 aa).

It belongs to the universal ribosomal protein uL18 family. In terms of assembly, part of the 50S ribosomal subunit. Contacts the 5S and 23S rRNAs.

Its function is as follows. This is one of the proteins that bind and probably mediate the attachment of the 5S RNA into the large ribosomal subunit, where it forms part of the central protuberance. The chain is Large ribosomal subunit protein uL18 from Saccharolobus solfataricus (strain ATCC 35092 / DSM 1617 / JCM 11322 / P2) (Sulfolobus solfataricus).